A 437-amino-acid chain; its full sequence is UDP-N-acetylmuramate--L-alanine ligase (437 aa).

G108–S114 contacts ATP.

This sequence belongs to the MurCDEF family.

The protein localises to the cytoplasm. It carries out the reaction UDP-N-acetyl-alpha-D-muramate + L-alanine + ATP = UDP-N-acetyl-alpha-D-muramoyl-L-alanine + ADP + phosphate + H(+). Its pathway is cell wall biogenesis; peptidoglycan biosynthesis. Its function is as follows. Cell wall formation. The polypeptide is UDP-N-acetylmuramate--L-alanine ligase (Staphylococcus haemolyticus (strain JCSC1435)).